The sequence spans 122 residues: MPITKDEIIKALEEMKLNELNELVKAIEDHFGVVASVGVAAAAPAEATNAAPTEVSVVMTSVGQQKVAVIKVVKELTGVGLMDAKKMVDGAMPVTIKEHVKPEEAEEMKAKLVEAGASIDLK.

This sequence belongs to the bacterial ribosomal protein bL12 family. In terms of assembly, homodimer. Part of the ribosomal stalk of the 50S ribosomal subunit. Forms a multimeric L10(L12)X complex, where L10 forms an elongated spine to which 2 to 4 L12 dimers bind in a sequential fashion. Binds GTP-bound translation factors.

Functionally, forms part of the ribosomal stalk which helps the ribosome interact with GTP-bound translation factors. Is thus essential for accurate translation. The protein is Large ribosomal subunit protein bL12 of Mycoplasma capricolum subsp. capricolum (strain California kid / ATCC 27343 / NCTC 10154).